The chain runs to 300 residues: Recombination-associated protein RdgC (300 aa).

Belongs to the RdgC family.

Its subcellular location is the cytoplasm. The protein localises to the nucleoid. May be involved in recombination. This is Recombination-associated protein RdgC from Herminiimonas arsenicoxydans.